The chain runs to 730 residues: Polyribonucleotide nucleotidyltransferase (730 aa).

Residues aspartate 489 and aspartate 495 each contribute to the Mg(2+) site. A KH domain is found at 556–615; sequence PRIEVMKIAVDKIREVIGSGGKVIREIVEKTGAKINIEDDGTIKIASASGDAIKAAINWI. The S1 motif domain occupies 625–693; sequence GQIYEGTVVK…ERGKTRLSMK (69 aa). Residues 700 to 730 are disordered; the sequence is GEDLEAKAKAERDAARAAAPAATGDEAGAAE. Positions 703–714 are enriched in basic and acidic residues; that stretch reads LEAKAKAERDAA. Over residues 715-730 the composition is skewed to low complexity; that stretch reads RAAAPAATGDEAGAAE.

It belongs to the polyribonucleotide nucleotidyltransferase family. Requires Mg(2+) as cofactor.

Its subcellular location is the cytoplasm. It carries out the reaction RNA(n+1) + phosphate = RNA(n) + a ribonucleoside 5'-diphosphate. Its function is as follows. Involved in mRNA degradation. Catalyzes the phosphorolysis of single-stranded polyribonucleotides processively in the 3'- to 5'-direction. The protein is Polyribonucleotide nucleotidyltransferase of Xanthobacter autotrophicus (strain ATCC BAA-1158 / Py2).